We begin with the raw amino-acid sequence, 560 residues long: Arginine--tRNA ligase (560 aa).

The 'HIGH' region signature appears at 164–174; sequence FYYNDAGNQID.

It belongs to the class-I aminoacyl-tRNA synthetase family. Monomer.

It is found in the cytoplasm. The enzyme catalyses tRNA(Arg) + L-arginine + ATP = L-arginyl-tRNA(Arg) + AMP + diphosphate. The chain is Arginine--tRNA ligase from Bordetella pertussis (strain Tohama I / ATCC BAA-589 / NCTC 13251).